A 138-amino-acid chain; its full sequence is Small ribosomal subunit protein uS11c (138 aa).

The protein belongs to the universal ribosomal protein uS11 family. As to quaternary structure, part of the 30S ribosomal subunit.

Its subcellular location is the plastid. This is Small ribosomal subunit protein uS11c from Cuscuta gronovii (Common dodder).